A 511-amino-acid polypeptide reads, in one-letter code: Cobyric acid synthase (511 aa).

Positions 251–443 (LLDIAIICLP…IHGIFDNDVF (193 aa)) constitute a GATase cobBQ-type domain. The active-site Nucleophile is the cysteine 332. Histidine 435 is a catalytic residue.

The protein belongs to the CobB/CobQ family. CobQ subfamily.

The protein operates within cofactor biosynthesis; adenosylcobalamin biosynthesis. Catalyzes amidations at positions B, D, E, and G on adenosylcobyrinic A,C-diamide. NH(2) groups are provided by glutamine, and one molecule of ATP is hydrogenolyzed for each amidation. This is Cobyric acid synthase from Listeria monocytogenes serotype 4b (strain CLIP80459).